Consider the following 110-residue polypeptide: Large ribosomal subunit protein uL22 (110 aa).

This sequence belongs to the universal ribosomal protein uL22 family. As to quaternary structure, part of the 50S ribosomal subunit.

Its function is as follows. This protein binds specifically to 23S rRNA; its binding is stimulated by other ribosomal proteins, e.g. L4, L17, and L20. It is important during the early stages of 50S assembly. It makes multiple contacts with different domains of the 23S rRNA in the assembled 50S subunit and ribosome. Functionally, the globular domain of the protein is located near the polypeptide exit tunnel on the outside of the subunit, while an extended beta-hairpin is found that lines the wall of the exit tunnel in the center of the 70S ribosome. This Colwellia psychrerythraea (strain 34H / ATCC BAA-681) (Vibrio psychroerythus) protein is Large ribosomal subunit protein uL22.